The chain runs to 156 residues: uncharacterized protein (156 aa).

The span at 1 to 12 (MSARPSLPPLPA) shows a compositional bias: pro residues. Disordered stretches follow at residues 1–89 (MSAR…PPPA) and 129–156 (PLSPPAKRRGIRTWGHPSYLTPSPTMRD). Over residues 49-67 (ARAEEAGGEEGKREAEAWT) the composition is skewed to basic and acidic residues.

This is an uncharacterized protein from Homo sapiens (Human).